A 731-amino-acid polypeptide reads, in one-letter code: Putative beta-galactosidase (731 aa).

The N-terminal stretch at 1–29 (MLCGKENNVMKMMLVYVFVLITLISCVYG) is a signal peptide. Glu-187 serves as the catalytic Proton donor. The active-site Nucleophile is Glu-257.

This sequence belongs to the glycosyl hydrolase 35 family. Senescing flower petals.

It catalyses the reaction Hydrolysis of terminal non-reducing beta-D-galactose residues in beta-D-galactosides.. This Dianthus caryophyllus (Carnation) protein is Putative beta-galactosidase (CARSR12).